The sequence spans 423 residues: Innexin eat-5 (423 aa).

A run of 4 helical transmembrane segments spans residues 25–41 (YYYS…TITA), 102–122 (PFIM…WSML), 277–297 (IFLF…FDSI), and 341–361 (HSIL…IILL).

Belongs to the pannexin family. Heterooligomer of eat-5 and another innexin. In terms of tissue distribution, expressed in pharyngeal muscles.

The protein localises to the cell membrane. It localises to the cell junction. Its subcellular location is the gap junction. In terms of biological role, structural component of the gap junctions. Required for synchronized pharyngeal muscle contractions. This Caenorhabditis elegans protein is Innexin eat-5 (eat-5).